Here is a 420-residue protein sequence, read N- to C-terminus: D-tagatose-1,6-bisphosphate aldolase subunit GatZ (420 aa).

It belongs to the GatZ/KbaZ family. GatZ subfamily. As to quaternary structure, forms a complex with GatY.

It participates in carbohydrate metabolism; D-tagatose 6-phosphate degradation; D-glyceraldehyde 3-phosphate and glycerone phosphate from D-tagatose 6-phosphate: step 2/2. In terms of biological role, component of the tagatose-1,6-bisphosphate aldolase GatYZ that is required for full activity and stability of the Y subunit. Could have a chaperone-like function for the proper and stable folding of GatY. When expressed alone, GatZ does not show any aldolase activity. Is involved in the catabolism of galactitol. The sequence is that of D-tagatose-1,6-bisphosphate aldolase subunit GatZ from Escherichia coli O9:H4 (strain HS).